The sequence spans 153 residues: Calmodulin-like protein 4 (153 aa).

EF-hand domains follow at residues 8–43 (DQIN…LGAS), 44–79 (PTPG…QIKQ), 81–116 (DPKK…LGEK), and 117–152 (LTHK…PVRD).

The protein belongs to the calmodulin family. In terms of assembly, interacts with MYO7B; the interaction mediates the association of CALML4 with the IMAC/intermicrovillar adhesion complex. Interacts with MYO7A.

The protein resides in the cell projection. It is found in the microvillus. In terms of biological role, as part of the intermicrovillar adhesion complex/IMAC plays a role in epithelial brush border differentiation, controlling microvilli organization and length. Acts as a light chain for MYO7B and is required for efficient targeting of the IMAC to the tips of border brush microvilli. The polypeptide is Calmodulin-like protein 4 (CALML4) (Bos taurus (Bovine)).